A 156-amino-acid polypeptide reads, in one-letter code: Putative NrdI-like protein (156 aa).

The chain is Putative NrdI-like protein from Streptococcus pneumoniae (strain ATCC BAA-255 / R6).